The chain runs to 160 residues: UPF0758 protein YfjY (160 aa).

In terms of domain architecture, MPN spans 38-160 (AFTSTQAARD…IYSFAEHGLL (123 aa)). Zn(2+) is bound by residues histidine 109, histidine 111, and aspartate 122. Residues 109-122 (HNHPSGDTTPSQAD) carry the JAMM motif motif.

The protein belongs to the UPF0758 family.

The protein is UPF0758 protein YfjY (yfjY) of Escherichia coli (strain K12).